A 672-amino-acid polypeptide reads, in one-letter code: DNA ligase (672 aa).

Residues 35–39, 84–85, and E116 contribute to the NAD(+) site; these read DAEYD and SL. Residue K118 is the N6-AMP-lysine intermediate of the active site. NAD(+)-binding residues include R139, E179, K295, and K319. Zn(2+) is bound by residues C413, C416, C431, and C436. The BRCT domain maps to 593 to 672; that stretch reads PRSAPLTGKT…EEFLRLAGKI (80 aa).

Belongs to the NAD-dependent DNA ligase family. LigA subfamily. Requires Mg(2+) as cofactor. The cofactor is Mn(2+).

The enzyme catalyses NAD(+) + (deoxyribonucleotide)n-3'-hydroxyl + 5'-phospho-(deoxyribonucleotide)m = (deoxyribonucleotide)n+m + AMP + beta-nicotinamide D-nucleotide.. DNA ligase that catalyzes the formation of phosphodiester linkages between 5'-phosphoryl and 3'-hydroxyl groups in double-stranded DNA using NAD as a coenzyme and as the energy source for the reaction. It is essential for DNA replication and repair of damaged DNA. In Syntrophus aciditrophicus (strain SB), this protein is DNA ligase.